Consider the following 252-residue polypeptide: ATP synthase subunit a (252 aa).

6 helical membrane-spanning segments follow: residues 29-49 (FTNV…FLFI), 87-107 (FFPL…IGLF), 117-137 (IMIT…CGFY), 146-166 (LFVP…IEVI), 196-216 (FIVS…LPLI), and 219-239 (VAIT…FTVL).

The protein belongs to the ATPase A chain family. As to quaternary structure, F-type ATPases have 2 components, CF(1) - the catalytic core - and CF(0) - the membrane proton channel. CF(1) has five subunits: alpha(3), beta(3), gamma(1), delta(1), epsilon(1). CF(0) has three main subunits: a(1), b(2) and c(9-12). The alpha and beta chains form an alternating ring which encloses part of the gamma chain. CF(1) is attached to CF(0) by a central stalk formed by the gamma and epsilon chains, while a peripheral stalk is formed by the delta and b chains.

The protein resides in the cell inner membrane. Its function is as follows. Key component of the proton channel; it plays a direct role in the translocation of protons across the membrane. This Bartonella bacilliformis (strain ATCC 35685 / KC583 / Herrer 020/F12,63) protein is ATP synthase subunit a.